Consider the following 587-residue polypeptide: Proteasome-associated ATPase (587 aa).

Residues 1–94 adopt a coiled-coil conformation; the sequence is MAARDDAEAR…KEEVDRLAQP (94 aa). Position 276 to 281 (276 to 281) interacts with ATP; it reads GCGKTL. The interval 586–587 is docks into pockets in the proteasome alpha-ring; it reads YL.

It belongs to the AAA ATPase family. As to quaternary structure, homohexamer. Assembles into a hexameric ring structure that caps the 20S proteasome core. Strongly interacts with the prokaryotic ubiquitin-like protein Pup through a hydrophobic interface; the interacting region of ARC lies in its N-terminal coiled-coil domain. There is one Pup binding site per ARC hexamer ring. Upon ATP-binding, the C-terminus of ARC interacts with the alpha-rings of the proteasome core, possibly by binding to the intersubunit pockets.

Its pathway is protein degradation; proteasomal Pup-dependent pathway. In terms of biological role, ATPase which is responsible for recognizing, binding, unfolding and translocation of pupylated proteins into the bacterial 20S proteasome core particle. May be essential for opening the gate of the 20S proteasome via an interaction with its C-terminus, thereby allowing substrate entry and access to the site of proteolysis. Thus, the C-termini of the proteasomal ATPase may function like a 'key in a lock' to induce gate opening and therefore regulate proteolysis. This is Proteasome-associated ATPase from Streptosporangium roseum (strain ATCC 12428 / DSM 43021 / JCM 3005 / KCTC 9067 / NCIMB 10171 / NRRL 2505 / NI 9100).